A 92-amino-acid polypeptide reads, in one-letter code: MFSHTKKVGPTGRFGPRYGLKIRVRVRDVEIKAKKKYKCPVCGFPKLKRASTSIWVCGKCGAKIAGGAYTPETGAGKAVMKAIRRIVERKEE.

Cysteine 39, cysteine 42, cysteine 57, and cysteine 60 together coordinate Zn(2+). The C4-type zinc finger occupies 39 to 60 (CPVCGFPKLKRASTSIWVCGKC).

This sequence belongs to the eukaryotic ribosomal protein eL43 family. Putative zinc-binding subfamily. As to quaternary structure, part of the 50S ribosomal subunit. The cofactor is Zn(2+).

Its function is as follows. Binds to the 23S rRNA. In Methanocaldococcus jannaschii (strain ATCC 43067 / DSM 2661 / JAL-1 / JCM 10045 / NBRC 100440) (Methanococcus jannaschii), this protein is Large ribosomal subunit protein eL43.